The chain runs to 531 residues: MSQEILDQVRRRRTFAIISHPDAGKTTLTEKLLLFSGAIQSAGTVKGKKTGKFATSDWMDIEKQRGISVASSVMQFDYKDHTVNLLDTPGHQDFSEDTYRVLTAVDSALMVIDAAKGVEAQTIKLLNVCRLRDTPIVTFMNKYDREVRDSLELLDEVEDILQIRCAPVTWPIGMGKNFKGVYHILNDEIYLFEAGGERLPHEFDIIKGINNPELEQRFPLEIQQLRDEIELVQAASNEFNLDEFLAGELTPVFFGSAINNFGIQEILNSLIDWAPAPKPRDATMRMVGPDEPKFSGFIFKIQANMDPKHRDRIAFLRVCSGKFERGMKMKHLRINREIAASSVVTFMSHDRELAEEAYAGDIIGIPNHGNIQIGDSFSEGEQLAFTGIPFFAPELFRSVRIKNPLKIKQLQKGLQQLGEEGAVQVFKPMSGADLILGAVGVLQFEVVTSRLANEYGVEAVFDSASIWSARWVSCDDKKKLAEFEKANAGNLAIDAGGNLAYLAPNRVNLGLTQERWPDIVFHETREHSVKL.

The tr-type G domain occupies 10 to 278 (RRRRTFAIIS…SLIDWAPAPK (269 aa)). GTP is bound by residues 19-26 (SHPDAGKT), 87-91 (DTPGH), and 141-144 (NKYD).

It belongs to the TRAFAC class translation factor GTPase superfamily. Classic translation factor GTPase family. PrfC subfamily.

It localises to the cytoplasm. Functionally, increases the formation of ribosomal termination complexes and stimulates activities of RF-1 and RF-2. It binds guanine nucleotides and has strong preference for UGA stop codons. It may interact directly with the ribosome. The stimulation of RF-1 and RF-2 is significantly reduced by GTP and GDP, but not by GMP. This Neisseria gonorrhoeae (strain ATCC 700825 / FA 1090) protein is Peptide chain release factor 3.